Consider the following 1393-residue polypeptide: ABC transporter G family member 3 (1393 aa).

Positions 1–14 (MEDKNNIELQEKAP) are enriched in basic and acidic residues. The segment at 1-68 (MEDKNNIELQ…IIYQNPTPAS (68 aa)) is disordered. The segment covering 15–50 (DNYNNNNNNNNNNNNNNNNNNNNNNNNNNNNNNDIN) has biased composition (low complexity). Positions 100–353 (VSANNISYYI…YFSSIGLAPL (254 aa)) constitute an ABC transporter 1 domain. ATP is bound at residue 144-151 (GIPGAGKS). The ABC transmembrane type-2 1 domain maps to 473–698 (MQYAVRFFQA…SYADGGYQGN (226 aa)). The next 7 membrane-spanning stretches (helical) occupy residues 479 to 499 (FFQAIFMGCVIGSLFVKMGFT), 509 to 529 (LVYFAMVLHIWTTIGSVEEFF), 558 to 578 (IPISLIEAILFSSCCYWIAGF), 585 to 605 (FIVFILGMALTNLIAQGIFQV), 615 to 635 (LASLICPAIVVLFMIMSGYMI), 640 to 660 (IPGWWIWLNALSPLRYVIDMV), and 724 to 744 (VDIVIILGFVCTFFFIFFLGV). Positions 783 to 1035 (MTFQNLNYVV…VIQHFTSAGY (253 aa)) constitute an ABC transporter 2 domain. Position 828-835 (828-835 (GPSGAGKS)) interacts with ATP. Residues 1121 to 1388 (QTILLRFLRS…FLGYLALRFI (268 aa)) form the ABC transmembrane type-2 2 domain. A run of 6 helical transmembrane segments spans residues 1122-1142 (TILLRFLRSFIPAIVIGTLFL), 1157-1177 (LVFLGFLFGGMASIGKVPTIV), 1206-1226 (LPMMVLTAFSYWIPMFFLTGL), 1235-1255 (FFFSLSVYLLVIMCYDSLATL), 1265-1285 (IAILVSGVGLNFLGLFGGFFI), and 1364-1384 (FYNLIILGGYFCAYTFLGYLA).

It belongs to the ABC transporter superfamily. ABCG family. PDR (TC 3.A.1.205) subfamily.

It is found in the membrane. This Dictyostelium discoideum (Social amoeba) protein is ABC transporter G family member 3 (abcG3).